A 244-amino-acid chain; its full sequence is Pyridoxine 5'-phosphate synthase (244 aa).

Asn9 is a 3-amino-2-oxopropyl phosphate binding site. Residue 11–12 (DH) participates in 1-deoxy-D-xylulose 5-phosphate binding. A 3-amino-2-oxopropyl phosphate-binding site is contributed by Arg20. His45 functions as the Proton acceptor in the catalytic mechanism. 1-deoxy-D-xylulose 5-phosphate contacts are provided by Arg47 and His52. Glu72 acts as the Proton acceptor in catalysis. Thr102 is a 1-deoxy-D-xylulose 5-phosphate binding site. His193 acts as the Proton donor in catalysis. Residues Gly194 and 215 to 216 (GH) contribute to the 3-amino-2-oxopropyl phosphate site.

This sequence belongs to the PNP synthase family. Homooctamer; tetramer of dimers.

It is found in the cytoplasm. The enzyme catalyses 3-amino-2-oxopropyl phosphate + 1-deoxy-D-xylulose 5-phosphate = pyridoxine 5'-phosphate + phosphate + 2 H2O + H(+). The protein operates within cofactor biosynthesis; pyridoxine 5'-phosphate biosynthesis; pyridoxine 5'-phosphate from D-erythrose 4-phosphate: step 5/5. Functionally, catalyzes the complicated ring closure reaction between the two acyclic compounds 1-deoxy-D-xylulose-5-phosphate (DXP) and 3-amino-2-oxopropyl phosphate (1-amino-acetone-3-phosphate or AAP) to form pyridoxine 5'-phosphate (PNP) and inorganic phosphate. This chain is Pyridoxine 5'-phosphate synthase, found in Blochmanniella pennsylvanica (strain BPEN).